The primary structure comprises 233 residues: Phosphoribosylaminoimidazole-succinocarboxamide synthase (233 aa).

This sequence belongs to the SAICAR synthetase family.

It carries out the reaction 5-amino-1-(5-phospho-D-ribosyl)imidazole-4-carboxylate + L-aspartate + ATP = (2S)-2-[5-amino-1-(5-phospho-beta-D-ribosyl)imidazole-4-carboxamido]succinate + ADP + phosphate + 2 H(+). The protein operates within purine metabolism; IMP biosynthesis via de novo pathway; 5-amino-1-(5-phospho-D-ribosyl)imidazole-4-carboxamide from 5-amino-1-(5-phospho-D-ribosyl)imidazole-4-carboxylate: step 1/2. The chain is Phosphoribosylaminoimidazole-succinocarboxamide synthase from Thermococcus sibiricus (strain DSM 12597 / MM 739).